A 349-amino-acid polypeptide reads, in one-letter code: Protein RecA (349 aa).

Phosphate is bound at residue S71–T75. ATP is bound by residues S71–T76 and D102–Y105. Position 196 (Q196) interacts with phosphate.

It belongs to the RecA family. In terms of assembly, polymerizes non-specifically on ssDNA to form filaments. Interacts with and activates LexA leading to autocatalytic cleavage of LexA, which derepresses the SOS regulon and activates DNA repair.

It is found in the cytoplasm. Its function is as follows. Required for homologous recombination (HR) and the bypass of mutagenic DNA lesions (double strand breaks, DSB) by the SOS response. Can catalyze the hydrolysis of ATP in the presence of single-stranded DNA, the ATP-dependent uptake of single-stranded DNA by duplex DNA, and the ATP-dependent hybridization of homologous single-stranded DNAs. Numerous X-ray crystals have been resolved under different conditions which indicate the flexibility of the protein, essential to its function. Gln-196 contributes to this plasticity by acting as a switch residue, which transmits the effect of nucleotide binding to the DNA-binding region. This Mycolicibacterium smegmatis (strain ATCC 700084 / mc(2)155) (Mycobacterium smegmatis) protein is Protein RecA.